We begin with the raw amino-acid sequence, 200 residues long: Large ribosomal subunit protein uL4 (200 aa).

The segment at 43-71 (RAQKTRAEVSGSGKKPWRQKGTGRARSGD) is disordered.

It belongs to the universal ribosomal protein uL4 family. Part of the 50S ribosomal subunit.

Its function is as follows. One of the primary rRNA binding proteins, this protein initially binds near the 5'-end of the 23S rRNA. It is important during the early stages of 50S assembly. It makes multiple contacts with different domains of the 23S rRNA in the assembled 50S subunit and ribosome. Functionally, forms part of the polypeptide exit tunnel. The sequence is that of Large ribosomal subunit protein uL4 from Aggregatibacter actinomycetemcomitans (Actinobacillus actinomycetemcomitans).